The sequence spans 709 residues: UV-stimulated scaffold protein A (709 aa).

Basic and acidic residues predominate over residues 1–10; that stretch reads MDQKLSKLVE. Residues 1–20 form a disordered region; that stretch reads MDQKLSKLVEELTTSGEPRL. The tract at residues 2–145 is VHS-like; the sequence is DQKLSKLVEE…HFLRHNKKVD (144 aa). Positions 165-199 form a coiled coil; sequence KHLDKIYQERASQAEREMQEMSGEIESCLTEVESC. Disordered regions lie at residues 230–289 and 386–406; these read SCAG…DSDL and EGGE…EDDE. The span at 280 to 289 shows a compositional bias: acidic residues; that stretch reads PSDEDEDSDL. Residues Ser-281 and Ser-287 each carry the phosphoserine modification. The span at 386-395 shows a compositional bias: basic and acidic residues; that stretch reads EGGERRRTEA. Residues 397–406 are compositionally biased toward acidic residues; it reads GDAEEDEDDE. Lys-414 participates in a covalent cross-link: Glycyl lysine isopeptide (Lys-Gly) (interchain with G-Cter in ubiquitin). The segment at 469 to 495 is disordered; that stretch reads DHLPPPSSASPSRALPEPQEAQKLAAE. A compositionally biased stretch (low complexity) spans 477-486; that stretch reads ASPSRALPEP. The UVSSA-type zinc-finger motif lies at 564–591; that stretch reads QHWCRAPRPDGRLCERQDRLKCPFHGKI. 4 residues coordinate Zn(2+): Cys-567, Cys-577, Cys-585, and His-588. The segment at 588–655 is disordered; the sequence is HGKIVPRDDE…GKGRGKKRRY (68 aa). The span at 592 to 632 shows a compositional bias: basic and acidic residues; sequence VPRDDEGRPLDPEDRAREQRRQLQKQERPEWQDPELMRDVE. Residues 646–655 show a composition bias toward basic residues; that stretch reads GKGRGKKRRY.

The protein belongs to the UVSSA family. As to quaternary structure, interacts with the elongating form of RNA polymerase II (RNA pol IIo) during transcription stress. Interacts with the TFIIH complex during transcription stress. Interacts with ERCC6. Interacts with ERCC8. Interacts with USP7. Monoubiquitinated at Lys-414 in response to transcription stress; this promotes efficient transfer of TFIIH to stalled RNA polymerase II.

It is found in the chromosome. Factor involved in transcription-coupled nucleotide excision repair (TC-NER), a mechanism that rapidly removes RNA polymerase II-blocking lesions from the transcribed strand of active genes. Acts as a key adapter that promotes recruitment of factors involved in TC-NER. Facilitates the ubiquitination of the elongating form of RNA polymerase II (RNA pol IIo) at DNA damage sites, thereby promoting RNA pol IIo backtracking and access by the TC-NER machinery to lesion sites. Also promotes stabilization of ERCC6/CSB by recruiting deubiquitinating enzyme USP7 to TC-NER complexes, preventing UV-induced degradation of ERCC6 by the proteasome. Mediates the recruitment of the TFIIH complex and other factors that are required for nucleotide excision repair to RNA polymerase II. Also required to inactivate stalled RNA polymerase II by blocking the access of TCEA1/TFIIS, thereby preventing reactivation of RNA polymerase II. Not involved in processing oxidative damage. The chain is UV-stimulated scaffold protein A from Homo sapiens (Human).